The primary structure comprises 354 residues: mRNA cap guanine-N(7) methyltransferase 2 (354 aa).

The mRNA cap 0 methyltransferase domain maps to 8–286 (KPEQSHHRLF…LYATFIFQKP (279 aa)). Residues Lys21, Asp61, and 88-89 (DP) contribute to the S-adenosyl-L-methionine site.

Belongs to the class I-like SAM-binding methyltransferase superfamily. mRNA cap 0 methyltransferase family.

Its subcellular location is the nucleus. It catalyses the reaction a 5'-end (5'-triphosphoguanosine)-ribonucleoside in mRNA + S-adenosyl-L-methionine = a 5'-end (N(7)-methyl 5'-triphosphoguanosine)-ribonucleoside in mRNA + S-adenosyl-L-homocysteine. Functionally, mRNA capping methyltransferase that methylates the N7 position of the added guanosine to the 5'-cap structure of mRNAs. Binds RNA containing 5'-terminal GpppC. The protein is mRNA cap guanine-N(7) methyltransferase 2 of Arabidopsis thaliana (Mouse-ear cress).